The following is a 610-amino-acid chain: Aspercryptin biosynthesis cluster-specific transcription regulator atnN (610 aa).

Over residues Met1–Ser26 the composition is skewed to polar residues. Residues Met1 to Arg27 are disordered. The zn(2)-C6 fungal-type DNA-binding region spans Cys30 to Cys57. Disordered stretches follow at residues Thr61–Ser81 and Ala427–Pro493. Low complexity-rich tracts occupy residues Gln66–Ala79 and Ser437–Pro474.

Its subcellular location is the nucleus. Transcription factor that positively regulates the cluster that mediate the production of aspercryptins, linear lipopeptides built from six amino acids including 2 highly unusual and nonproteogenic amino acids, 2-amino-octanoic acid (2aoa) and 2-amino-dodecanol (2adol). The sequence is that of Aspercryptin biosynthesis cluster-specific transcription regulator atnN from Emericella nidulans (strain FGSC A4 / ATCC 38163 / CBS 112.46 / NRRL 194 / M139) (Aspergillus nidulans).